Reading from the N-terminus, the 275-residue chain is Bis(5'-nucleosyl)-tetraphosphatase, symmetrical (275 aa).

This sequence belongs to the Ap4A hydrolase family.

The enzyme catalyses P(1),P(4)-bis(5'-adenosyl) tetraphosphate + H2O = 2 ADP + 2 H(+). Functionally, hydrolyzes diadenosine 5',5'''-P1,P4-tetraphosphate to yield ADP. The polypeptide is Bis(5'-nucleosyl)-tetraphosphatase, symmetrical (Stutzerimonas stutzeri (strain A1501) (Pseudomonas stutzeri)).